The chain runs to 382 residues: Succinate--CoA ligase [ADP-forming] subunit beta (382 aa).

Residues 9 to 240 (KELLKKYGLP…ITQIDPLEVE (232 aa)) enclose the ATP-grasp domain. Residues lysine 46, glutamate 98, threonine 101, and glutamate 106 each coordinate ATP. Mg(2+) is bound by residues asparagine 195 and aspartate 209. Substrate is bound by residues asparagine 260 and 317-319 (GIL).

The protein belongs to the succinate/malate CoA ligase beta subunit family. In terms of assembly, heterotetramer of two alpha and two beta subunits. Mg(2+) serves as cofactor.

The enzyme catalyses succinate + ATP + CoA = succinyl-CoA + ADP + phosphate. The catalysed reaction is GTP + succinate + CoA = succinyl-CoA + GDP + phosphate. The protein operates within carbohydrate metabolism; tricarboxylic acid cycle; succinate from succinyl-CoA (ligase route): step 1/1. Succinyl-CoA synthetase functions in the citric acid cycle (TCA), coupling the hydrolysis of succinyl-CoA to the synthesis of either ATP or GTP and thus represents the only step of substrate-level phosphorylation in the TCA. The beta subunit provides nucleotide specificity of the enzyme and binds the substrate succinate, while the binding sites for coenzyme A and phosphate are found in the alpha subunit. The chain is Succinate--CoA ligase [ADP-forming] subunit beta from Hydrogenobaculum sp. (strain Y04AAS1).